The following is a 355-amino-acid chain: Peptide chain release factor 1 (355 aa).

The residue at position 231 (Gln231) is an N5-methylglutamine.

This sequence belongs to the prokaryotic/mitochondrial release factor family. Post-translationally, methylated by PrmC. Methylation increases the termination efficiency of RF1.

Its subcellular location is the cytoplasm. Its function is as follows. Peptide chain release factor 1 directs the termination of translation in response to the peptide chain termination codons UAG and UAA. This is Peptide chain release factor 1 from Nautilia profundicola (strain ATCC BAA-1463 / DSM 18972 / AmH).